The sequence spans 654 residues: MAIMHKIGCAGSEVETDRVLEKDQANNGHFVDSDCCFQETGSTGTANSICTLNDSEDDNSSLNSVDNNECTNLDCGGKKHKNLSPNPSFHVNINAAEFIPKSHNGYAPKSMNPPPEQLDSPCYPHFDQDSSSVIYPSPPSTYYPNMYVSANTFIPMPYAHYTDNMYHAKPVNRPNFLPREGTPPPFAQQPAEQFSPFNSEYESLLDFRALILGNLPVDYKISELLSLIHSGPLEKIQSNPGKRRIIITFLDSADAFFFYERYHPRGFIFHGRPLKLTFARPSPLPESIQNFCSNTAASRNVFIGNLPSSYHEKEIEEAFGKFGKIEHIKILSKKNIAFVHFLNIRDAIKVVRTLSCDPDYHSWRIFFGSDRCANHPPSFDERSCFTSKQNPDTTSDRCRQQESKDNGNRTVFLGNLHTKTKGHEICDLIRHGGLQDFHYIPEKHICFVTFITYSAANAFHDYLAEEEVLLHGRRIKVGWGKESGPLPRVLEDSILMGASRNVYFSHISDSLTTEELELILRQYGEIESIKYLKNRSSGFVAYTNISNAMKAVNGLPIHPLFKKSKIRYAPDRCEQELQKSKSNSPIQQNVPLQQFITPPFSYPVAYCPAIPPGSDPILNFGIQYQPFIPFTAVPSFPFNCNVPNYPQTSDHEND.

In terms of domain architecture, RRM 1 spans 299-355 (RNVFIGNLPSSYHEKEIEEAFGKFGKIEHIKILSKKNIAFVHFLNIRDAIKVVRTLS). The disordered stretch occupies residues 383–404 (SCFTSKQNPDTTSDRCRQQESK). Over residues 384–393 (CFTSKQNPDT) the composition is skewed to polar residues. Positions 394-404 (TSDRCRQQESK) are enriched in basic and acidic residues. 2 consecutive RRM domains span residues 409–482 (RTVF…WGKE) and 500–571 (RNVY…YAPD).

Its subcellular location is the cytoplasm. In terms of biological role, has a role in meiosis. The polypeptide is Meiotically up-regulated gene 24 protein (mug24) (Schizosaccharomyces pombe (strain 972 / ATCC 24843) (Fission yeast)).